The following is a 170-amino-acid chain: Adenine phosphoribosyltransferase (170 aa).

It belongs to the purine/pyrimidine phosphoribosyltransferase family. As to quaternary structure, homodimer.

It localises to the cytoplasm. The enzyme catalyses AMP + diphosphate = 5-phospho-alpha-D-ribose 1-diphosphate + adenine. The protein operates within purine metabolism; AMP biosynthesis via salvage pathway; AMP from adenine: step 1/1. Functionally, catalyzes a salvage reaction resulting in the formation of AMP, that is energically less costly than de novo synthesis. This chain is Adenine phosphoribosyltransferase, found in Pseudothermotoga lettingae (strain ATCC BAA-301 / DSM 14385 / NBRC 107922 / TMO) (Thermotoga lettingae).